A 664-amino-acid polypeptide reads, in one-letter code: Protein IQ-DOMAIN 28 (664 aa).

The interval 1 to 85 (MGKTPGKWIK…DESKDNLESR (85 aa)) is disordered. Residues 51–64 (VDPPVVSSQPVPAS) show a composition bias toward low complexity. A compositionally biased stretch (basic and acidic residues) spans 76–85 (DESKDNLESR). 3 consecutive IQ domains span residues 93–121 (LEQAAIKVQATFRAHQARRAFRTLKGIIR), 122–140 (LQAVIRGHLVRRQAIATYS), and 144–170 (GIVKFQALVRGQKARSSDIAIQFQKKH). The interval 106-116 (AHQARRAFRTL) is calmodulin-binding. Disordered stretches follow at residues 244–488 (EIPK…KEKD), 502–573 (DEKS…SGRK), and 637–664 (AKGSMNGDKSFTSSKDITHKSTRTDWKR). The Nuclear localization signal 1 motif lies at 251–258 (KKRNYQAV). Over residues 305–315 (DPLRNESDKAN) the composition is skewed to basic and acidic residues. The span at 339–353 (SPSLKRSSLSNGSKK) shows a compositional bias: low complexity. The short motif at 351–358 (SKKATLRS) is the Nuclear localization signal 2 element. 3 stretches are compositionally biased toward basic and acidic residues: residues 358-367 (SAEKKKKDIP), 427-447 (TEKEKDTADPVQIEPERKVLE), and 502-532 (DEKSPVLDRTEEDELKTAETSDKAEALKCAD). The segment covering 536 to 547 (SSENGNVGSDNT) has biased composition (polar residues). Basic and acidic residues predominate over residues 652 to 664 (DITHKSTRTDWKR).

Belongs to the IQD family. As to quaternary structure, binds to multiple calmodulin (CaM) in the presence of Ca(2+) and CaM-like proteins.

The protein resides in the nucleus. It localises to the cytoplasm. The protein localises to the cytoskeleton. May be involved in cooperative interactions with calmodulins or calmodulin-like proteins. Recruits calmodulin proteins to microtubules, thus being a potential scaffold in cellular signaling and trafficking. May associate with nucleic acids and regulate gene expression at the transcriptional or post-transcriptional level. The polypeptide is Protein IQ-DOMAIN 28 (Arabidopsis thaliana (Mouse-ear cress)).